The chain runs to 345 residues: Anthranilate phosphoribosyltransferase (345 aa).

5-phospho-alpha-D-ribose 1-diphosphate-binding positions include G80, 83–84 (GD), T88, 90–93 (NIST), 108–116 (KHGNRSVSS), and S120. G80 provides a ligand contact to anthranilate. S92 provides a ligand contact to Mg(2+). Position 111 (N111) interacts with anthranilate. Residue R166 participates in anthranilate binding. Positions 225 and 226 each coordinate Mg(2+).

The protein belongs to the anthranilate phosphoribosyltransferase family. Homodimer. The cofactor is Mg(2+).

It catalyses the reaction N-(5-phospho-beta-D-ribosyl)anthranilate + diphosphate = 5-phospho-alpha-D-ribose 1-diphosphate + anthranilate. It functions in the pathway amino-acid biosynthesis; L-tryptophan biosynthesis; L-tryptophan from chorismate: step 2/5. In terms of biological role, catalyzes the transfer of the phosphoribosyl group of 5-phosphorylribose-1-pyrophosphate (PRPP) to anthranilate to yield N-(5'-phosphoribosyl)-anthranilate (PRA). The sequence is that of Anthranilate phosphoribosyltransferase from Pelotomaculum thermopropionicum (strain DSM 13744 / JCM 10971 / SI).